The primary structure comprises 355 residues: Probable nitronate monooxygenase (355 aa).

FMN-binding positions include Asn-71, Gln-175, Gly-180, Gly-218, and 237-240 (QMGT).

Belongs to the nitronate monooxygenase family. NMO class I subfamily. It depends on FMN as a cofactor.

It catalyses the reaction 3 propionate 3-nitronate + 3 O2 + H2O = 3 3-oxopropanoate + 2 nitrate + nitrite + H2O2 + 3 H(+). In terms of biological role, nitronate monooxygenase that uses molecular oxygen to catalyze the oxidative denitrification of alkyl nitronates. Acts on propionate 3-nitronate (P3N), the presumed physiological substrate. Probably functions in the detoxification of P3N, a metabolic poison produced by plants and fungi as a defense mechanism. This is Probable nitronate monooxygenase from Staphylococcus aureus (strain MRSA252).